Here is a 117-residue protein sequence, read N- to C-terminus: Immunoglobulin kappa variable 1-27 (117 aa).

Positions 1 to 22 are cleaved as a signal peptide; it reads MDMRVPAQLLGLLLLWLPDTRC. The segment at 23-45 is framework-1; the sequence is DIQMTQSPSSLSASVGDRVTITC. Positions 23–117 constitute an Ig-like domain; the sequence is DIQMTQSPSS…YYCQKYNSAP (95 aa). The cysteines at positions 45 and 110 are disulfide-linked. Positions 46–56 are complementarity-determining-1; sequence RASQGISNYLA. The framework-2 stretch occupies residues 57–71; that stretch reads WYQQKPGKVPKLLIY. The tract at residues 72 to 78 is complementarity-determining-2; that stretch reads AASTLQS. A framework-3 region spans residues 79 to 110; the sequence is GVPSRFSGSGSGTDFTLTISSLQPEDVATYYC. The interval 111–117 is complementarity-determining-3; it reads QKYNSAP.

Immunoglobulins are composed of two identical heavy chains and two identical light chains; disulfide-linked.

The protein resides in the secreted. The protein localises to the cell membrane. In terms of biological role, v region of the variable domain of immunoglobulin light chains that participates in the antigen recognition. Immunoglobulins, also known as antibodies, are membrane-bound or secreted glycoproteins produced by B lymphocytes. In the recognition phase of humoral immunity, the membrane-bound immunoglobulins serve as receptors which, upon binding of a specific antigen, trigger the clonal expansion and differentiation of B lymphocytes into immunoglobulins-secreting plasma cells. Secreted immunoglobulins mediate the effector phase of humoral immunity, which results in the elimination of bound antigens. The antigen binding site is formed by the variable domain of one heavy chain, together with that of its associated light chain. Thus, each immunoglobulin has two antigen binding sites with remarkable affinity for a particular antigen. The variable domains are assembled by a process called V-(D)-J rearrangement and can then be subjected to somatic hypermutations which, after exposure to antigen and selection, allow affinity maturation for a particular antigen. The protein is Immunoglobulin kappa variable 1-27 of Homo sapiens (Human).